A 319-amino-acid polypeptide reads, in one-letter code: UDP-N-acetylenolpyruvoylglucosamine reductase (319 aa).

Residues 35-198 (VGGPAEAMFK…TGCVLAGRPD (164 aa)) form the FAD-binding PCMH-type domain. Residue Arg178 is part of the active site. The active-site Proton donor is Ser227. Residue Glu302 is part of the active site.

The protein belongs to the MurB family. FAD serves as cofactor.

It localises to the cytoplasm. The catalysed reaction is UDP-N-acetyl-alpha-D-muramate + NADP(+) = UDP-N-acetyl-3-O-(1-carboxyvinyl)-alpha-D-glucosamine + NADPH + H(+). It functions in the pathway cell wall biogenesis; peptidoglycan biosynthesis. Its function is as follows. Cell wall formation. This chain is UDP-N-acetylenolpyruvoylglucosamine reductase, found in Rhodospirillum rubrum (strain ATCC 11170 / ATH 1.1.1 / DSM 467 / LMG 4362 / NCIMB 8255 / S1).